A 402-amino-acid polypeptide reads, in one-letter code: Phosphoglycerate kinase (402 aa).

Residues 24-26 (DFN), Arg40, 63-66 (HFGR), Arg122, and Arg155 each bind substrate. Residues Lys206, Gly297, Glu328, and 357–360 (GGDS) contribute to the ATP site.

It belongs to the phosphoglycerate kinase family. As to quaternary structure, monomer.

The protein resides in the cytoplasm. It catalyses the reaction (2R)-3-phosphoglycerate + ATP = (2R)-3-phospho-glyceroyl phosphate + ADP. It functions in the pathway carbohydrate degradation; glycolysis; pyruvate from D-glyceraldehyde 3-phosphate: step 2/5. The chain is Phosphoglycerate kinase from Synechococcus sp. (strain RCC307).